The chain runs to 201 residues: Natural cytotoxicity triggering receptor 3 (201 aa).

The signal sequence occupies residues 1-18; it reads MAWMLLLILIMVHPGSCA. The 108-residue stretch at 19–126 folds into the Ig-like domain; it reads LWVSQPPEIR…VGTGNGTRLV (108 aa). Residues 19–135 lie on the Extracellular side of the membrane; the sequence is LWVSQPPEIR…VVEKEHPQLG (117 aa). Cysteines 39 and 108 form a disulfide. Residues asparagine 42 and asparagine 121 are each glycosylated (N-linked (GlcNAc...) asparagine). A helical transmembrane segment spans residues 136 to 156; that stretch reads AGTVLLLRAGFYAVSFLSVAV. Over 157–201 the chain is Cytoplasmic; it reads GSTVYYQGKCLTWKGPRRQLPAVVPAPLPPPCGSSAHLLPPVPGG.

Belongs to the natural cytotoxicity receptor (NCR) family. In terms of assembly, homodimer in the unliganted form. Interacts with CD3Z. Interacts with and is activated by binding to NCR3LG1. Interacts with and is activated by binding to BAG6. Interacts with and is inhibited by binding to LGALS3. Selectively expressed by all resting and activated NK cells and weakly expressed in spleen.

It localises to the cell membrane. Cell membrane receptor of natural killer/NK cells that is activated by binding of extracellular ligands including BAG6 and NCR3LG1. Stimulates NK cells cytotoxicity toward neighboring cells producing these ligands. It controls, for instance, NK cells cytotoxicity against tumor cells. Engagement of NCR3 by BAG6 also promotes myeloid dendritic cells (DC) maturation, both through killing DCs that did not acquire a mature phenotype, and inducing the release by NK cells of TNFA and IFNG which promote DC maturation. This is Natural cytotoxicity triggering receptor 3 from Homo sapiens (Human).